Reading from the N-terminus, the 161-residue chain is 3-isopropylmalate dehydratase small subunit (161 aa).

This sequence belongs to the LeuD family. LeuD type 2 subfamily. As to quaternary structure, heterodimer of LeuC and LeuD.

It catalyses the reaction (2R,3S)-3-isopropylmalate = (2S)-2-isopropylmalate. Its pathway is amino-acid biosynthesis; L-leucine biosynthesis; L-leucine from 3-methyl-2-oxobutanoate: step 2/4. Functionally, catalyzes the isomerization between 2-isopropylmalate and 3-isopropylmalate, via the formation of 2-isopropylmaleate. The protein is 3-isopropylmalate dehydratase small subunit of Clostridium botulinum (strain Eklund 17B / Type B).